Consider the following 499-residue polypeptide: Probable UTP--glucose-1-phosphate uridylyltransferase (499 aa).

UTP-binding positions include 108 to 111 (LNGG), Lys122, Gln185, and Gly214. 110 to 111 (GG) contacts substrate. Substrate-binding positions include His215 and 243–245 (NID). Asp245 and Lys387 together coordinate UTP.

It belongs to the UDPGP type 1 family.

It is found in the cytoplasm. Its subcellular location is the nucleus. It carries out the reaction alpha-D-glucose 1-phosphate + UTP + H(+) = UDP-alpha-D-glucose + diphosphate. In terms of biological role, plays a central role as a glucosyl donor in cellular metabolic pathways. In Schizosaccharomyces pombe (strain 972 / ATCC 24843) (Fission yeast), this protein is Probable UTP--glucose-1-phosphate uridylyltransferase.